Consider the following 386-residue polypeptide: Leupaxin (386 aa).

Met-1 is modified (N-acetylmethionine). Residues Glu-3 to Thr-15 carry the LD motif 1 motif. The interval Glu-12–Asp-51 is disordered. The span at Leu-16 to Ala-26 shows a compositional bias: polar residues. Residue Ser-19 is modified to Phosphoserine. At Tyr-22 the chain carries Phosphotyrosine. The span at Ser-33 to Ser-44 shows a compositional bias: basic and acidic residues. Tyr-62 carries the post-translational modification Phosphotyrosine. Short sequence motifs (LD motif) lie at residues Asn-70–Pro-82 and Gln-92–Met-103. Position 72 is a phosphotyrosine; by LYN (Tyr-72). At Ser-81 the chain carries Phosphoserine. LIM zinc-binding domains are found at residues Gly-150–Pro-209, Arg-210–Ser-267, Pro-268–Thr-327, and Leu-328–Leu-386.

Belongs to the paxillin family. In terms of assembly, interacts with unphosphorylated ITGA4. Interacts with AR and SRF. Interacts with PTK2B/PYK2, PTPN22 and PTPN12. Interacts (via LD motif 3) with LYN and the interaction is induced upon B-cell antigen receptor (BCR) activation. Interacts (via LD motif 3) with PTK2/FAK. In terms of processing, phosphorylated on tyrosine residues. Phosphorylation on Tyr-72 is important for its inhibitory function. Bombesin stimulates phosphorylation on Tyr-22, Tyr-62 and Tyr-72.

The protein resides in the cytoplasm. It is found in the cell junction. Its subcellular location is the focal adhesion. The protein localises to the nucleus. It localises to the perinuclear region. The protein resides in the cell projection. It is found in the podosome. Its subcellular location is the cell membrane. Transcriptional coactivator for androgen receptor (AR) and serum response factor (SRF). Contributes to the regulation of cell adhesion, spreading and cell migration and acts as a negative regulator in integrin-mediated cell adhesion events. Suppresses the integrin-induced tyrosine phosphorylation of paxillin (PXN). May play a critical role as an adapter protein in the formation of the adhesion zone in osteoclasts. Negatively regulates B-cell antigen receptor (BCR) signaling. The chain is Leupaxin (LPXN) from Oryctolagus cuniculus (Rabbit).